The following is a 131-amino-acid chain: Chromatin accessibility complex protein 1 (131 aa).

A2 carries the post-translational modification N-acetylalanine. Positions A100–S124 form a coiled coil. K102 carries the N6-acetyllysine modification. A disordered region spans residues E109–S131. Residues R112–S131 show a composition bias toward acidic residues. S124 carries the post-translational modification Phosphoserine.

Heterodimer with POLE3; binds to DNA. Component of the CHRAC ISWI chromatin remodeling complex at least composed of SMARCA5/SNF2H, BAZ1A/ACF1, CHRAC1 and POLE3; the complex preferentially binds DNA through the CHRAC1-POLE3 heterodimer and possesses ATP-dependent nucleosome-remodeling activity. Within the complex, the heterodimer with POLE3 interacts with SMARCA5/SNF2H; the interaction is direct and enhances nucleosome sliding activity by the SMARCA5/SNF2H and BAZ1A/ACF1 interaction. Within the complex, the heterodimer with POLE3 interacts with BAZ1A/ACF1; the interactions are direct. As to expression, expressed in heart, brain, placenta, lung, liver, skeletal muscle, kidney and pancreas.

The protein resides in the nucleus. Functionally, forms a complex with DNA polymerase epsilon subunit POLE3 and binds naked DNA, which is then incorporated into chromatin, aided by the nucleosome remodeling activity of ISWI/SNF2H and ACF1. Does not enhance nucleosome sliding activity of the ACF-5 ISWI chromatin remodeling complex. The sequence is that of Chromatin accessibility complex protein 1 (CHRAC1) from Homo sapiens (Human).